Reading from the N-terminus, the 288-residue chain is Transmembrane protein 163 (288 aa).

Residues 1 to 64 (MEPALGSERR…ESGQFSDGLE (64 aa)) are disordered. Residues 1-87 (MEPALGSERR…HEAQNYRKKA (87 aa)) lie on the Cytoplasmic side of the membrane. Phosphoserine is present on Ser11. The span at 12–24 (PPGPGVPRPPPRG) shows a compositional bias: pro residues. Residues 25–42 (HAPSTAAPAPSPAPMSSS) are compositionally biased toward low complexity. Residues 41 to 71 (SSVQSDEERQPRISESGQFSDGLEDRGLLES) form a required for interaction with MCOLN1 region. Residues Ser45, Ser54, Ser56, and Ser60 each carry the phosphoserine modification. Residues 88–108 (LWVSWLSIIVTLALAVAAFTV) form a helical membrane-spanning segment. At 109 to 115 (SVMRYSA) the chain is on the extracellular side. A helical transmembrane segment spans residues 116–136 (SAFGFAFDAILDVLSSAIVLW). At 137–149 (RYSNAAAVHSANR) the chain is on the cytoplasmic side. The chain crosses the membrane as a helical span at residues 150–170 (EYIACVILGVIFLLSSICIVV). Residues 171–186 (KAIHDLSTRLLPEVDD) lie on the Extracellular side of the membrane. A helical transmembrane segment spans residues 187-207 (FLFSVSILSGILCSVLAVLKF). Over 208–216 (MLGKVLTSR) the chain is Cytoplasmic. A helical transmembrane segment spans residues 217–237 (ALITDGFNSLVGGVMGFSILL). At 238–254 (SAEVFKHNAAVWYLDGS) the chain is on the extracellular side. Residues 255-275 (IGVLIGLTIFAYGVKLLIDMV) traverse the membrane as a helical segment. The Cytoplasmic segment spans residues 276-288 (PRVRQTRHYEMFE).

It belongs to the TMEM163 family. As to quaternary structure, homodimer. Interacts with MCOLN1. Interacts with SLC30A1, SLC30A2, SLC30A3 and SLC30A4. Widely expressed, with high expression in the brain, cerebellum, heart, lung and spleen. In the brain, mainly expressed in the glutaminergic neuron subpopulations.

Its subcellular location is the cytoplasmic vesicle. The protein resides in the secretory vesicle. It is found in the synaptic vesicle membrane. It localises to the early endosome membrane. The protein localises to the late endosome membrane. Its subcellular location is the lysosome membrane. The protein resides in the cell membrane. It carries out the reaction Zn(2+)(in) = Zn(2+)(out). In terms of biological role, zinc ion transporter that mediates zinc efflux and plays a crucial role in intracellular zinc homeostasis. Binds the divalent cations Zn(2+), Ni(2+), and to a minor extent Cu(2+). Is a functional modulator of P2X purinoceptors, including P2RX1, P2RX3, P2RX4 and P2RX7. Plays a role in central nervous system development and is required for myelination, and survival and proliferation of oligodendrocytes. This is Transmembrane protein 163 (Tmem163) from Mus musculus (Mouse).